A 354-amino-acid polypeptide reads, in one-letter code: Probable L-ascorbate-6-phosphate lactonase UlaG (354 aa).

This sequence belongs to the UlaG family. A divalent metal cation serves as cofactor.

It is found in the cytoplasm. The enzyme catalyses L-ascorbate 6-phosphate + H2O = 3-dehydro-L-gulonate 6-phosphate. It participates in cofactor degradation; L-ascorbate degradation; D-xylulose 5-phosphate from L-ascorbate: step 1/4. Its function is as follows. Probably catalyzes the hydrolysis of L-ascorbate-6-P into 3-keto-L-gulonate-6-P. Is essential for L-ascorbate utilization under anaerobic conditions. The polypeptide is Probable L-ascorbate-6-phosphate lactonase UlaG (Salmonella choleraesuis (strain SC-B67)).